Here is a 196-residue protein sequence, read N- to C-terminus: Flagellar transcriptional regulator FlhC (196 aa).

Zn(2+) is bound by residues C138, C141, C158, and C161.

The protein belongs to the FlhC family. As to quaternary structure, heterohexamer composed of two FlhC and four FlhD subunits. Each FlhC binds a FlhD dimer, forming a heterotrimer, and a hexamer assembles by dimerization of two heterotrimers. Zn(2+) serves as cofactor.

It localises to the cytoplasm. Its function is as follows. Functions in complex with FlhD as a master transcriptional regulator that regulates transcription of several flagellar and non-flagellar operons by binding to their promoter region. Activates expression of class 2 flagellar genes, including fliA, which is a flagellum-specific sigma factor that turns on the class 3 genes. Also regulates genes whose products function in a variety of physiological pathways. The sequence is that of Flagellar transcriptional regulator FlhC from Sodalis glossinidius (strain morsitans).